The following is a 428-amino-acid chain: Elongation factor 1-alpha (428 aa).

Residues 5 to 225 enclose the tr-type G domain; the sequence is KPILNVAFIG…DAFQPPEKPT (221 aa). A G1 region spans residues 14–21; it reads GHVDAGKS. Residue 14–21 coordinates GTP; sequence GHVDAGKS. Ser21 contributes to the Mg(2+) binding site. Residues 70 to 74 are G2; sequence GVTID. The interval 91–94 is G3; that stretch reads DCPG. GTP is bound by residues 91–95 and 149–152; these read DCPGH and NKMD. The G4 stretch occupies residues 149-152; the sequence is NKMD. Residues 189 to 191 are G5; it reads ASL.

This sequence belongs to the TRAFAC class translation factor GTPase superfamily. Classic translation factor GTPase family. EF-Tu/EF-1A subfamily.

The protein resides in the cytoplasm. The enzyme catalyses GTP + H2O = GDP + phosphate + H(+). Functionally, GTP hydrolase that promotes the GTP-dependent binding of aminoacyl-tRNA to the A-site of ribosomes during protein biosynthesis. This chain is Elongation factor 1-alpha, found in Methanococcus maripaludis (strain C6 / ATCC BAA-1332).